Consider the following 150-residue polypeptide: MAKIILTHEVTGLGAAGDVVEVKNGYARNYLLPRGFALTWTKGGEKQVESIKAARAAREHASVEAAQAQAAKLSSTPVRLEVKAGDSGRLFGTVKAEDVAKAVEAAGLGSIDKRKVEIPAHIKSVGKYQANVRLHEDVSAVIDLNVVAGK.

It belongs to the bacterial ribosomal protein bL9 family.

Functionally, binds to the 23S rRNA. The chain is Large ribosomal subunit protein bL9 from Renibacterium salmoninarum (strain ATCC 33209 / DSM 20767 / JCM 11484 / NBRC 15589 / NCIMB 2235).